Consider the following 202-residue polypeptide: Dephospho-CoA kinase (202 aa).

The DPCK domain occupies 3 to 200; that stretch reads TIGLTGGIGS…QRYLTLAANR (198 aa). 11-16 contacts ATP; it reads GSGKSA.

The protein belongs to the CoaE family.

It localises to the cytoplasm. The enzyme catalyses 3'-dephospho-CoA + ATP = ADP + CoA + H(+). It participates in cofactor biosynthesis; coenzyme A biosynthesis; CoA from (R)-pantothenate: step 5/5. Its function is as follows. Catalyzes the phosphorylation of the 3'-hydroxyl group of dephosphocoenzyme A to form coenzyme A. This chain is Dephospho-CoA kinase, found in Thiobacillus denitrificans (strain ATCC 25259 / T1).